Consider the following 223-residue polypeptide: N-acetylmuramate alpha-1-phosphate uridylyltransferase (223 aa).

Residues 11-13 and K23 contribute to the UTP site; that span reads GER. Substrate is bound at residue N105. D107 serves as a coordination point for Mg(2+). Positions 140 and 205 each coordinate substrate. A Mg(2+)-binding site is contributed by D205.

Belongs to the nucleotidyltransferase MurU family. As to quaternary structure, monomer. Requires Mg(2+) as cofactor.

It catalyses the reaction N-acetyl-alpha-D-muramate 1-phosphate + UDP + H(+) = UDP-N-acetyl-alpha-D-muramate + phosphate. It functions in the pathway cell wall biogenesis; peptidoglycan recycling. Its activity is regulated as follows. Is completely inhibited by EDTA in vitro. Its function is as follows. Catalyzes the formation of UDP-N-acetylmuramate (UDP-MurNAc), a crucial precursor of the bacterial peptidoglycan cell wall, from UTP and MurNAc-alpha-1P. Is involved in peptidoglycan recycling as part of a cell wall recycling pathway that bypasses de novo biosynthesis of the peptidoglycan precursor UDP-MurNAc. Plays a role in intrinsic resistance to fosfomycin, which targets the de novo synthesis of UDP-MurNAc. Is not able to use GlcNAc-alpha-1P and GalNAc-alpha-1P as substrates. Cannot accept other nucleotide triphosphates (ATP, CTP, TTP, or GTP) than UTP. This chain is N-acetylmuramate alpha-1-phosphate uridylyltransferase, found in Pseudomonas putida (strain ATCC 47054 / DSM 6125 / CFBP 8728 / NCIMB 11950 / KT2440).